Here is a 319-residue protein sequence, read N- to C-terminus: tRNA-cytidine(32) 2-sulfurtransferase (319 aa).

A PP-loop motif motif is present at residues 45–50; it reads SGGKDS. [4Fe-4S] cluster-binding residues include C120, C123, and C211.

This sequence belongs to the TtcA family. Homodimer. Mg(2+) is required as a cofactor. The cofactor is [4Fe-4S] cluster.

The protein resides in the cytoplasm. The enzyme catalyses cytidine(32) in tRNA + S-sulfanyl-L-cysteinyl-[cysteine desulfurase] + AH2 + ATP = 2-thiocytidine(32) in tRNA + L-cysteinyl-[cysteine desulfurase] + A + AMP + diphosphate + H(+). Its pathway is tRNA modification. Catalyzes the ATP-dependent 2-thiolation of cytidine in position 32 of tRNA, to form 2-thiocytidine (s(2)C32). The sulfur atoms are provided by the cysteine/cysteine desulfurase (IscS) system. This Shewanella woodyi (strain ATCC 51908 / MS32) protein is tRNA-cytidine(32) 2-sulfurtransferase.